Here is a 490-residue protein sequence, read N- to C-terminus: Cytochrome P450 2C54 (490 aa).

A Phosphoserine modification is found at Ser-127. N6-acetyllysine is present on residues Lys-252 and Lys-375. Cys-435 lines the heme pocket.

It belongs to the cytochrome P450 family. Heme serves as cofactor. As to expression, expressed in liver.

The protein localises to the endoplasmic reticulum membrane. It localises to the microsome membrane. The enzyme catalyses an organic molecule + reduced [NADPH--hemoprotein reductase] + O2 = an alcohol + oxidized [NADPH--hemoprotein reductase] + H2O + H(+). Metabolizes arachidonic acid mainly to 12-hydroxyeicosatetraenoic acid (HETE). The polypeptide is Cytochrome P450 2C54 (Mus musculus (Mouse)).